We begin with the raw amino-acid sequence, 861 residues long: E3 ubiquitin-protein ligase HECTD3 (861 aa).

N-acetylalanine is present on A2. A Phosphoserine modification is found at S12. One can recognise a DOC domain in the interval 219-397 (DEDLIHFLYD…TSLVRYPRLE (179 aa)). The 346-residue stretch at 512 to 857 (YEKPLDYRWP…NCVAIDTDMS (346 aa)) folds into the HECT domain. The Glycyl thioester intermediate role is filled by C823.

As to quaternary structure, interacts with TRIOBP. Interacts with STX8.

Its subcellular location is the cytoplasm. The protein resides in the perinuclear region. The enzyme catalyses S-ubiquitinyl-[E2 ubiquitin-conjugating enzyme]-L-cysteine + [acceptor protein]-L-lysine = [E2 ubiquitin-conjugating enzyme]-L-cysteine + N(6)-ubiquitinyl-[acceptor protein]-L-lysine.. It participates in protein modification; protein ubiquitination. Its function is as follows. E3 ubiquitin ligases accepts ubiquitin from an E2 ubiquitin-conjugating enzyme in the form of a thioester and then directly transfers the ubiquitin to targeted substrates. Mediates ubiquitination of TRIOBP and its subsequent proteasomal degradation, thus facilitating cell cycle progression by regulating the turn-over of TRIOBP. Mediates also ubiquitination of STX8. In Homo sapiens (Human), this protein is E3 ubiquitin-protein ligase HECTD3 (HECTD3).